The chain runs to 722 residues: MDGYDRRAPYDLNSRKINHPDFESVMSQRDTFNNVSSKQCMENQWIVIHPTRQTRMFKEILAGRLGYTDGQGIYNSVRSTETAIRQIQNTILTLSLDAVRYDDLKNDWIRHADMRGMSAKKLARTYGMHSEAEAVKVAENVFVTWRKTLQTTLINLARQLISCFTTANINTSSFSKYIDWICCLGIVPVVRHDRSARATSSIPTCAGRSTVFPNWAFHDASSRLRVVDSVMARGKQIVNYLSNSMSAVSILEYDRTLIEYNFFKRELRVKDILSGERGECIVIWRPVMNDGGVIFDSPMQRIYKEIIECHDLRQHATLCRLVNTAPVKVLIAKRDDGCKGVAGAQRVIDKVLGDQPENAASSAASRLVKLIIGLKGMRHVGDITDTVRDYLEETSGHLLDAASIDTSQPGFGQSNRAQSSTTEETRRNTIKIRDAFHSSVVTSINEMLEGYVNKLFNTVEGLKAANKDLLAKLCSKELELDRVRTEHLISKQAHTDMGNSQYSPTLETLARDLKHDVIDVGEVMDDDSYVANSFQSRYIPAYDVDLKRLSELWEQEMLRCFKLTRATNNQGHEVSISYSNSAITLLLAPYFFSVLNIYDIGPIVTNHEVYKSEEELCNSVFEKTRIHVYLDDLALIFNADVKRAIAKYFLVRNNSGRQREAEDLPDGHHGRRNDFHSPSSRRERYSRRSGYKRHRWNRESRRDYRRTQSTTNGEDDDGSQRD.

Positions 402–426 (ASIDTSQPGFGQSNRAQSSTTEETR) are disordered. Polar residues predominate over residues 404 to 422 (IDTSQPGFGQSNRAQSSTT). Residues 448-469 (LEGYVNKLFNTVEGLKAANKDL) are putative leucine zipper motif. Residues 658 to 683 (QREAEDLPDGHHGRRNDFHSPSSRRE) show a composition bias toward basic and acidic residues. Residues 658–722 (QREAEDLPDG…GEDDDGSQRD (65 aa)) are disordered. The span at 684–696 (RYSRRSGYKRHRW) shows a compositional bias: basic residues. Basic and acidic residues predominate over residues 697-706 (NRESRRDYRR). Acidic residues predominate over residues 713 to 722 (GEDDDGSQRD).

It belongs to the herpesviridae portal protein family. In terms of assembly, homododecamerizes. Interacts with terminase subunits TRM1 and TRM3.

The protein localises to the virion. It localises to the host nucleus. In terms of biological role, forms a portal in the viral capsid through which viral DNA is translocated during DNA packaging. Assembles as a dodecamer at a single fivefold axe of the T=16 icosahedric capsid. Binds to the molecular motor that translocates the viral DNA, termed terminase. This chain is Portal protein (MDV018), found in Gallid herpesvirus 2 (strain Chicken/Md5/ATCC VR-987) (GaHV-2).